The sequence spans 202 residues: KDEYITILQVSVPAPNLSPNLTCTITNTSKKKSKTFKLPETRNSQSSKKANPTPQAKNHYIEATKPTATKNIVGAMAPSNLNVNILTTFTHHQMSSWLMCEVSGFYPEDIHLWWLSAQTKMDPINFVTAQPVRQSGDKFQIWSVLRLPVALSPSLDTYTCVVEHEASQTKLNASKSLEISGCYHLLPESDGPPRRPDGPAFP.

The tract at residues 32 to 58 (KSKTFKLPETRNSQSSKKANPTPQAKN) is disordered. Residues 41-56 (TRNSQSSKKANPTPQA) show a composition bias toward polar residues. One can recognise an Ig-like domain in the interval 66–178 (PTATKNIVGA…TKLNASKSLE (113 aa)).

The polypeptide is Ig delta chain C region (Rattus norvegicus (Rat)).